The sequence spans 332 residues: Phosphate acyltransferase (332 aa).

This sequence belongs to the PlsX family. Homodimer. Probably interacts with PlsY.

The protein localises to the cytoplasm. The catalysed reaction is a fatty acyl-[ACP] + phosphate = an acyl phosphate + holo-[ACP]. It participates in lipid metabolism; phospholipid metabolism. Its function is as follows. Catalyzes the reversible formation of acyl-phosphate (acyl-PO(4)) from acyl-[acyl-carrier-protein] (acyl-ACP). This enzyme utilizes acyl-ACP as fatty acyl donor, but not acyl-CoA. The polypeptide is Phosphate acyltransferase (Nitratiruptor sp. (strain SB155-2)).